We begin with the raw amino-acid sequence, 341 residues long: Uroporphyrinogen decarboxylase (341 aa).

Residues 23–27 (RQAGR), Asp73, Tyr148, Ser203, and His318 each bind substrate.

Belongs to the uroporphyrinogen decarboxylase family. Homodimer.

It localises to the cytoplasm. It carries out the reaction uroporphyrinogen III + 4 H(+) = coproporphyrinogen III + 4 CO2. The protein operates within porphyrin-containing compound metabolism; protoporphyrin-IX biosynthesis; coproporphyrinogen-III from 5-aminolevulinate: step 4/4. In terms of biological role, catalyzes the decarboxylation of four acetate groups of uroporphyrinogen-III to yield coproporphyrinogen-III. This is Uroporphyrinogen decarboxylase from Brucella suis (strain ATCC 23445 / NCTC 10510).